A 156-amino-acid polypeptide reads, in one-letter code: Cyanate hydratase (156 aa).

Catalysis depends on residues arginine 96, glutamate 99, and serine 122.

This sequence belongs to the cyanase family.

It carries out the reaction cyanate + hydrogencarbonate + 3 H(+) = NH4(+) + 2 CO2. Catalyzes the reaction of cyanate with bicarbonate to produce ammonia and carbon dioxide. The protein is Cyanate hydratase of Escherichia coli (strain K12 / DH10B).